An 865-amino-acid polypeptide reads, in one-letter code: Xylosyltransferase 2 (865 aa).

The Cytoplasmic segment spans residues 1-15; the sequence is MVASARVQKLVRRYK. A helical; Signal-anchor for type II membrane protein transmembrane segment spans residues 16–36; sequence LAIATALAILLLQGLVVWSFS. Residues 37-865 lie on the Lumenal side of the membrane; sequence GLEEDEPGEK…GPVKADGRLR (829 aa). Residues 39–157 form a disordered region; it reads EEDEPGEKGR…EGAPQPTDNG (119 aa). The span at 53-65 shows a compositional bias: basic and acidic residues; it reads RPLDPGEGSKDTD. The segment covering 73–82 has biased composition (basic residues); the sequence is SAGRRHGRWR. N122 carries N-linked (GlcNAc...) asparagine glycosylation. Low complexity predominate over residues 125-137; that stretch reads GAAAGEALVGAAG. Cystine bridges form between C162–C190, C206–C448, C467–C480, and C469–C478. UDP-alpha-D-xylose contacts are provided by residues V239, D267, and 296-298; that span reads TIW. The N-linked (GlcNAc...) asparagine glycan is linked to N327. 400–401 is a UDP-alpha-D-xylose binding site; sequence DW. Residues S481 and 504–505 each bind UDP-alpha-D-xylose; that span reads RK. Disulfide bonds link C581-C833 and C826-C839. The N-linked (GlcNAc...) asparagine glycan is linked to N683.

This sequence belongs to the glycosyltransferase 14 family. XylT subfamily. In terms of assembly, monomer. Requires Mg(2+) as cofactor. The cofactor is Mn(2+). In terms of processing, contains disulfide bonds.

It is found in the golgi apparatus membrane. The protein resides in the secreted. The enzyme catalyses UDP-alpha-D-xylose + L-seryl-[protein] = 3-O-(beta-D-xylosyl)-L-seryl-[protein] + UDP + H(+). Its pathway is glycan metabolism; chondroitin sulfate biosynthesis. The protein operates within glycan metabolism; heparan sulfate biosynthesis. Catalyzes the first step in the biosynthesis of chondroitin sulfate, heparan sulfate and dermatan sulfate proteoglycans, such as DCN. Transfers D-xylose from UDP-D-xylose to specific serine residues of the core protein. In Canis lupus familiaris (Dog), this protein is Xylosyltransferase 2 (XYLT2).